Consider the following 616-residue polypeptide: Dihydroxy-acid dehydratase (616 aa).

Position 81 (Asp-81) interacts with Mg(2+). Residue Cys-122 participates in [2Fe-2S] cluster binding. Mg(2+) contacts are provided by Asp-123 and Lys-124. N6-carboxylysine is present on Lys-124. [2Fe-2S] cluster is bound at residue Cys-195. Glu-491 lines the Mg(2+) pocket. The active-site Proton acceptor is the Ser-517.

This sequence belongs to the IlvD/Edd family. As to quaternary structure, homodimer. [2Fe-2S] cluster serves as cofactor. Mg(2+) is required as a cofactor.

It carries out the reaction (2R)-2,3-dihydroxy-3-methylbutanoate = 3-methyl-2-oxobutanoate + H2O. It catalyses the reaction (2R,3R)-2,3-dihydroxy-3-methylpentanoate = (S)-3-methyl-2-oxopentanoate + H2O. It functions in the pathway amino-acid biosynthesis; L-isoleucine biosynthesis; L-isoleucine from 2-oxobutanoate: step 3/4. Its pathway is amino-acid biosynthesis; L-valine biosynthesis; L-valine from pyruvate: step 3/4. In terms of biological role, functions in the biosynthesis of branched-chain amino acids. Catalyzes the dehydration of (2R,3R)-2,3-dihydroxy-3-methylpentanoate (2,3-dihydroxy-3-methylvalerate) into 2-oxo-3-methylpentanoate (2-oxo-3-methylvalerate) and of (2R)-2,3-dihydroxy-3-methylbutanoate (2,3-dihydroxyisovalerate) into 2-oxo-3-methylbutanoate (2-oxoisovalerate), the penultimate precursor to L-isoleucine and L-valine, respectively. This chain is Dihydroxy-acid dehydratase, found in Serratia proteamaculans (strain 568).